Consider the following 135-residue polypeptide: Helix-loop-helix protein 2 (135 aa).

The segment at 1–80 (MMLSPDQAAD…RRRATAKYRS (80 aa)) is disordered. Residues 10 to 21 (DSDHPSSAHSDP) are compositionally biased toward basic and acidic residues. A compositionally biased stretch (basic residues) spans 68-80 (KRRRRRATAKYRS). Residues 77 to 129 (KYRSAHATRERIRVEAFNLAFAELRKLLPTLPPDKKLSKIEILRLAICYISYL) form the bHLH domain.

As to quaternary structure, homodimer. Interacts and may form heterodimers with STAT3.

Its subcellular location is the nucleus. In terms of biological role, transcription factor which binds the E box motif 5'-CA[TC][AG]TG-3'. Involved in regulating energy expenditure, body mass, voluntary physical activity, mating behavior and reproductive longevity, acting through the hypothalamic-pituitary-gonadal axis. Acts as a transcriptional activator of target genes, including NDN, PCSK1, MC4R. Is also a transcriptional activator of KISS1. May act centrally to regulate function of both white and brown adipose tissue. Together with NHLH1, required to maintain migration and survival of cells in the anterior extramural migration stream (aes), which forms the precerebellar nuclei. Also, in concert with NHLH1, may determine fate of gonadotropin releasing hormone-1 (GnRH-1) neurons. The polypeptide is Helix-loop-helix protein 2 (NHLH2) (Homo sapiens (Human)).